We begin with the raw amino-acid sequence, 219 residues long: Cytochrome b6 (219 aa).

The helical transmembrane segment at 32 to 52 (IFYCFGGIVLTCFIIQAATGF) threads the bilayer. Residue C35 coordinates heme c. Heme b is bound by residues H86 and H100. The next 3 membrane-spanning stretches (helical) occupy residues 90-110 (SGLMVLVLLLHVSRVYLTAGF), 116-136 (LTWISGVILAICTVSFGVTGY), and 190-210 (AHTFILPLVTLALLLTHFLMI). H191 and H206 together coordinate heme b.

Belongs to the cytochrome b family. PetB subfamily. As to quaternary structure, the 4 large subunits of the cytochrome b6-f complex are cytochrome b6, subunit IV (17 kDa polypeptide, PetD), cytochrome f and the Rieske protein, while the 4 small subunits are PetG, PetL, PetM and PetN. The complex functions as a dimer. The cofactor is heme b. Heme c serves as cofactor.

The protein localises to the plastid. The protein resides in the chloroplast thylakoid membrane. In terms of biological role, component of the cytochrome b6-f complex, which mediates electron transfer between photosystem II (PSII) and photosystem I (PSI), cyclic electron flow around PSI, and state transitions. This is Cytochrome b6 from Amphidinium operculatum (Dinoflagellate).